A 312-amino-acid chain; its full sequence is Mas-related G-protein coupled receptor member E (312 aa).

Residues 1-20 (MMEPREAGQHVGAANGAQED) are Extracellular-facing. A helical membrane pass occupies residues 21–41 (VAFNLIILSLTEGLGLGGLLG). The Cytoplasmic segment spans residues 42 to 59 (NGAVLWLLSSNVYRNPFA). Residues 60-80 (IYLLDVACADLIFLGCHMVAI) form a helical membrane-spanning segment. The Extracellular portion of the chain corresponds to 81-106 (VPDLLQGRLDFPGFVQTSLATLRFFC). The chain crosses the membrane as a helical span at residues 107 to 127 (YIVGLSLLAAVSVEQCLAALF). The Cytoplasmic segment spans residues 128–141 (PAWYSCRRPRHLTT). Residues 142-162 (CVCALTWALCLLLHLLLSGAC) form a helical membrane-spanning segment. Residues 163–176 (TQFFGEPSRHLCRT) lie on the Extracellular side of the membrane. A helical membrane pass occupies residues 177–197 (LWLVAAVLLALLCCTMCGASL). Over 198-217 (MLLLRVERGPQRPPPRGFPG) the chain is Cytoplasmic. A helical membrane pass occupies residues 218-238 (LILLTVLLFLFCGLPFGIYWL). Residues 239 to 241 (SRN) lie on the Extracellular side of the membrane. The helical transmembrane segment at 242–262 (LLWYIPHYFYHFSFLMAAVHC) threads the bilayer. The Cytoplasmic portion of the chain corresponds to 263–312 (AAKPVVYFCLGSAQGRRLPLRLVLQRALGDEAELGAVRETSRRGLVDIAA).

Belongs to the G-protein coupled receptor 1 family. Mas subfamily.

The protein resides in the cell membrane. Its function is as follows. Orphan receptor. May regulate nociceptor function and/or development, including the sensation or modulation of pain. The protein is Mas-related G-protein coupled receptor member E (MRGPRE) of Homo sapiens (Human).